The following is a 647-amino-acid chain: Zinc transporter ZIP4 (647 aa).

The signal sequence occupies residues 1–22 (MASLVSLELGLLLAVLVVTATA). The Extracellular portion of the chain corresponds to 23 to 327 (SPPAGLLSLL…QDQLSQSERY (305 aa)). Disulfide bonds link Cys-57–Cys-62, Cys-65–Cys-111, and Cys-160–Cys-195. A disordered region spans residues 236–255 (EAHSDHSHRHRGASSRDPVP). Residue Asn-261 is glycosylated (N-linked (GlcNAc...) asparagine). Residues Cys-270 and Cys-309 are joined by a disulfide bond. A helical membrane pass occupies residues 328–348 (LYGSLATLLICLCAVFGLLLL). The Cytoplasmic portion of the chain corresponds to 349 to 359 (TCTGCRGVTHY). Residues 360 to 380 (ILQTFLSLAVGAVTGDAVLHL) traverse the membrane as a helical segment. Residues 381–402 (TPKVLGLHTHSEEGLSPQPTWR) lie on the Extracellular side of the membrane. Residues 403–423 (LLAMLAGLYAFFLFENLFNLL) traverse the membrane as a helical segment. Residues 424 to 498 (LPRDPEDLED…LSPELRLLPY (75 aa)) are Cytoplasmic-facing. Positions 452 to 454 (LQL) match the Essential for SLC39A4 endocytosis motif. Residues 458–484 (ELRQPKPPHEGSRADLVAEESPELLNP) form a disordered region. The span at 460 to 470 (RQPKPPHEGSR) shows a compositional bias: basic and acidic residues. The helical transmembrane segment at 499–518 (MITLGDAVHNFADGLAVGAA) threads the bilayer. Positions 507, 508, and 511 each coordinate Zn(2+). Residues 519–526 (FASSWKTG) lie on the Extracellular side of the membrane. The chain crosses the membrane as a helical span at residues 527 to 553 (LATSLAVFCHELPHELGDFAALLHAGL). Residues His-536, Glu-537, and His-540 each contribute to the Zn(2+) site. Residues 554-558 (SVRQA) are Cytoplasmic-facing. The chain crosses the membrane as a helical span at residues 559-579 (LLLNLASALTAFAGLYVALAV). Residues 580–586 (GVSEESE) lie on the Extracellular side of the membrane. The helical transmembrane segment at 587–607 (AWILAVATGLFLYVALCDMLP) threads the bilayer. Over 608-617 (AMLKVRDPRP) the chain is Cytoplasmic. The helical transmembrane segment at 618 to 638 (WLLFLLHNVGLLGGWTVLLLL) threads the bilayer. Residues 639-647 (SLYEDDITF) lie on the Extracellular side of the membrane.

This sequence belongs to the ZIP transporter (TC 2.A.5) family. Homodimer; homodimerization is mediated by the transmembrane domain. In terms of processing, the extracellular N-terminal ectodomain is cleaved when cells are Zn(2+) deficient, N-terminally cleaved SLC39A4 is internalized at a faster rate. Post-translationally, under excess Zn(2+) conditions, SLC39A4 on the cell surface is rapidly endocytosed, ubiquitinated and degraded. Glycosylated. In terms of tissue distribution, highly expressed in kidney, small intestine, stomach, colon, jejunum and duodenum.

The protein resides in the cell membrane. It localises to the recycling endosome membrane. Its subcellular location is the apical cell membrane. It carries out the reaction Zn(2+)(in) = Zn(2+)(out). Its activity is regulated as follows. The Zn(2+) uniporter activity is regulated by zinc availability. Extracellular acidification stimulated SLC39A4-dependent Zn(2+) uptake. Its function is as follows. Selective transporter that mediates the uptake of Zn(2+). Plays an essential role for dietary zinc uptake from small intestine. The Zn(2+) uniporter activity is regulated by zinc availability. Also exhibits polyspecific binding and transport of Cu(2+), Cd(2+) and possibly Ni(2+) but at higher concentrations. The chain is Zinc transporter ZIP4 from Homo sapiens (Human).